Reading from the N-terminus, the 287-residue chain is ATP synthase gamma chain (287 aa).

It belongs to the ATPase gamma chain family. In terms of assembly, F-type ATPases have 2 components, CF(1) - the catalytic core - and CF(0) - the membrane proton channel. CF(1) has five subunits: alpha(3), beta(3), gamma(1), delta(1), epsilon(1). CF(0) has three main subunits: a, b and c.

It localises to the cell inner membrane. Its function is as follows. Produces ATP from ADP in the presence of a proton gradient across the membrane. The gamma chain is believed to be important in regulating ATPase activity and the flow of protons through the CF(0) complex. This is ATP synthase gamma chain from Klebsiella pneumoniae subsp. pneumoniae (strain ATCC 700721 / MGH 78578).